Consider the following 829-residue polypeptide: Venom phosphodiesterase CdcPDE (829 aa).

SMB domains follow at residues 8–51 (PQVS…VLPT) and 52–96 (QSWS…GETS). 16 cysteine pairs are disulfide-bonded: C12/C16, C12/C29, C16/C47, C27/C29, C27/C40, C33/C39, C40/C47, C56/C61, C56/C73, C61/C91, C71/C73, C71/C84, C77/C83, C84/C91, C102/C148, and C110/C322. N-linked (GlcNAc...) asparagine glycosylation is present at N17. Positions 36 to 38 (RQA) match the Cell attachment site motif. A divalent metal cation-binding residues include D125 and T163. The AMP-threonine intermediate role is filled by T163. 2 N-linked (GlcNAc...) asparagine glycosylation sites follow: N194 and N237. K249 is an AMP binding site. Positions 283, 287, 330, and 331 each coordinate a divalent metal cation. H287 lines the AMP pocket. Intrachain disulfides connect C338/C435, C386/C771, C519/C577, C532/C632, C534/C617, and C740/C750. An N-linked (GlcNAc...) asparagine glycan is attached at N383. H440 provides a ligand contact to a divalent metal cation. Residues N572 and N652 are each glycosylated (N-linked (GlcNAc...) asparagine).

Belongs to the nucleotide pyrophosphatase/phosphodiesterase family. Monomer. The cofactor is a divalent metal cation. N-glycosylated. Glycosylation counts for an increased mass of ~9%. Post-translationally, contains 16 disulfide bonds. Expressed by venom gland.

The protein resides in the secreted. It carries out the reaction ADP + H2O = AMP + phosphate + H(+). In terms of biological role, hydrolyzes ADP with high activity. Shows weak or no activity on 5'-AMP, 5'-GMP, 3'-AMP, ATP, cAMP, and cGMP. Is devoid of monophosphatase and proteinase activities. Inhibits ADP-induced platelet aggregation and is cytotoxic to human keratinocytes. Kinetic parameters indicated a higher affinity for the substrate bis(p-nitrophenyl) phosphate compared to others snake venom PDEs. Is recognized by the crotalid antivenom produced by the Instituto Butantan. The sequence is that of Venom phosphodiesterase CdcPDE from Crotalus durissus collilineatus (Brazilian rattlesnake).